Reading from the N-terminus, the 127-residue chain is Large ribosomal subunit protein bL21 (127 aa).

Belongs to the bacterial ribosomal protein bL21 family. Part of the 50S ribosomal subunit. Contacts protein L20.

This protein binds to 23S rRNA in the presence of protein L20. In Synechococcus elongatus (strain ATCC 33912 / PCC 7942 / FACHB-805) (Anacystis nidulans R2), this protein is Large ribosomal subunit protein bL21.